A 202-amino-acid polypeptide reads, in one-letter code: Imidazole glycerol phosphate synthase subunit HisH (202 aa).

Residues 3–202 (RIVIIDYGLG…KILKNFVEMC (200 aa)) enclose the Glutamine amidotransferase type-1 domain. The active-site Nucleophile is cysteine 79. Residues histidine 183 and glutamate 185 contribute to the active site.

As to quaternary structure, heterodimer of HisH and HisF.

The protein localises to the cytoplasm. It carries out the reaction 5-[(5-phospho-1-deoxy-D-ribulos-1-ylimino)methylamino]-1-(5-phospho-beta-D-ribosyl)imidazole-4-carboxamide + L-glutamine = D-erythro-1-(imidazol-4-yl)glycerol 3-phosphate + 5-amino-1-(5-phospho-beta-D-ribosyl)imidazole-4-carboxamide + L-glutamate + H(+). The catalysed reaction is L-glutamine + H2O = L-glutamate + NH4(+). It functions in the pathway amino-acid biosynthesis; L-histidine biosynthesis; L-histidine from 5-phospho-alpha-D-ribose 1-diphosphate: step 5/9. In terms of biological role, IGPS catalyzes the conversion of PRFAR and glutamine to IGP, AICAR and glutamate. The HisH subunit catalyzes the hydrolysis of glutamine to glutamate and ammonia as part of the synthesis of IGP and AICAR. The resulting ammonia molecule is channeled to the active site of HisF. This is Imidazole glycerol phosphate synthase subunit HisH from Methanosarcina acetivorans (strain ATCC 35395 / DSM 2834 / JCM 12185 / C2A).